The chain runs to 30 residues: Photosystem II reaction center protein Psb30 (30 aa).

The Lumenal segment spans residues 1-6; sequence EVIAQL. The chain crosses the membrane as a helical span at residues 7–21; the sequence is TMIAMIGIAGPMIIF. Over 22 to 30 the chain is Cytoplasmic; that stretch reads LLAVRRGNL.

This sequence belongs to the Psb30/Ycf12 family. In terms of assembly, PSII is composed of 1 copy each of membrane proteins PsbA, PsbB, PsbC, PsbD, PsbE, PsbF, PsbH, PsbI, PsbJ, PsbK, PsbL, PsbM, PsbT, PsbX, PsbY, PsbZ, Psb30/Ycf12, peripheral proteins PsbO, CyanoQ (PsbQ), PsbU, PsbV and a large number of cofactors. It forms dimeric complexes. PSII binds multiple chlorophylls, carotenoids and specific lipids. is required as a cofactor.

The protein resides in the cellular thylakoid membrane. A core subunit of photosystem II (PSII), probably helps stabilize the reaction center. PSII is a light-driven water plastoquinone oxidoreductase, using light energy to abstract electrons from H(2)O, generating a proton gradient subsequently used for ATP formation. The protein is Photosystem II reaction center protein Psb30 of Thermostichus vulcanus (Synechococcus vulcanus).